Reading from the N-terminus, the 356-residue chain is Glycerol-1-phosphate dehydrogenase [NAD(P)+] (356 aa).

NAD(+) contacts are provided by residues 103-107 (GRSID) and 125-128 (TAAS). A substrate-binding site is contributed by Asp130. NAD(+) is bound at residue Ser134. Residue Asp177 coordinates substrate. Zn(2+) is bound by residues Asp177 and His257. His261 contributes to the substrate binding site. His273 is a binding site for Zn(2+).

Belongs to the glycerol-1-phosphate dehydrogenase family. It depends on Zn(2+) as a cofactor.

Its subcellular location is the cytoplasm. The catalysed reaction is sn-glycerol 1-phosphate + NAD(+) = dihydroxyacetone phosphate + NADH + H(+). The enzyme catalyses sn-glycerol 1-phosphate + NADP(+) = dihydroxyacetone phosphate + NADPH + H(+). It functions in the pathway membrane lipid metabolism; glycerophospholipid metabolism. In terms of biological role, catalyzes the NAD(P)H-dependent reduction of dihydroxyacetonephosphate (DHAP or glycerone phosphate) to glycerol 1-phosphate (G1P). The G1P thus generated is used as the glycerophosphate backbone of phospholipids in the cellular membranes of Archaea. The polypeptide is Glycerol-1-phosphate dehydrogenase [NAD(P)+] (Methanosarcina mazei (strain ATCC BAA-159 / DSM 3647 / Goe1 / Go1 / JCM 11833 / OCM 88) (Methanosarcina frisia)).